Reading from the N-terminus, the 156-residue chain is UPF0756 membrane protein Exig_2210 (156 aa).

5 helical membrane passes run 5–25, 52–72, 83–103, 109–129, and 131–151; these read LFLI…LIIA, WGVT…DIGF, IGII…HGVG, PLVT…FRGV, and VGPL…DIIV.

This sequence belongs to the UPF0756 family.

The protein localises to the cell membrane. The chain is UPF0756 membrane protein Exig_2210 from Exiguobacterium sibiricum (strain DSM 17290 / CCUG 55495 / CIP 109462 / JCM 13490 / 255-15).